A 613-amino-acid polypeptide reads, in one-letter code: MTGCGRRSGWLPPLRLLLLPLLLGGPGVGAAQLAALYSASDPLTLLQADTVRSTVLNSPSAWAVEFFASWCGHCIAFAPTWKALAKDIKDWRPALNLAALNCADETNNAVCRDFNIAGFPSVRFFKAFSKNSTGTTLPVAGANVQMLRERLIDALESHHDTWPSACPPLEPVKPKEIDTFFARNNQEYLVLIFEQENSYLGREVTLDLSQHHDLVVRRVLSTEANVVRKFGVADFPSCYLLFRNGSVSRVPVLVESRRFYTAYLQRLSEVTREGTPTPAVPTISDQIAPTVWKFADRSKIYMADLESALHYILRVEVGRFSVLEGQRLMALKKFVTVLTKYFPGQPLVRNFLQSTNEWLKRQHKKKMPYSFFKTAMDSRNEEAVITKEVNWVGCQGSESHFRGFPCSLWILFHFLTVQASQKNAESSQKPANGQEVLQAIRNYVRFFFGCRDCANHFEQMAAGSMHRVKSPNDAVLWLWTSHNRVNARLAGAPSEDPQFPKVQWPPPELCSACHNELSGEPVWDVDATLRFLKTHFSPSNIVLNFPPAEPASRSSVHSWGATPHLELDALGLVTRNSALALERAEISESPGSNAMPNIPAERPELFEALSHSR.

The signal sequence occupies residues 1-30 (MTGCGRRSGWLPPLRLLLLPLLLGGPGVGA). In terms of domain architecture, Thioredoxin spans 37–157 (YSASDPLTLL…RERLIDALES (121 aa)). Catalysis depends on nucleophile residues Cys-71 and Cys-74. Disulfide bonds link Cys-71-Cys-74 and Cys-102-Cys-111. 2 N-linked (GlcNAc...) asparagine glycosylation sites follow: Asn-131 and Asn-244. A disulfide bridge links Cys-394 with Cys-406. Residues 397 to 504 (SESHFRGFPC…EDPQFPKVQW (108 aa)) form the ERV/ALR sulfhydryl oxidase domain. Positions 402, 409, and 413 each coordinate FAD. Phosphoserine is present on Ser-427. Cys-450 and Cys-453 are disulfide-bonded. FAD-binding positions include Asp-452, His-456, 479–486 (WTSHNRVN), Lys-501, and Trp-504. Cys-510 and Cys-513 are disulfide-bonded.

Belongs to the quiescin-sulfhydryl oxidase (QSOX) family. In terms of assembly, monomer. It depends on FAD as a cofactor. Post-translationally, N-glycosylated. O-glycosylated on Thr and Ser residues. As to expression, detected in endometrium and in uterus glandular epithelial cells (at protein level). Expressed in testis, placenta, pancreas, lung, ovary, endometrium, but not in brain, liver and kidney tissues. Higher expression in epithelial cells.

Its subcellular location is the secreted. The catalysed reaction is 2 R'C(R)SH + O2 = R'C(R)S-S(R)CR' + H2O2. Its function is as follows. Catalyzes the oxidation of sulfhydryl groups in peptide and protein thiols to disulfides with the reduction of oxygen to hydrogen peroxide. Plays a role in disulfide bond formation in a variety of extracellular proteins. In fibroblasts, required for normal incorporation of laminin into the extracellular matrix, and thereby for normal cell-cell adhesion and cell migration. The sequence is that of Sulfhydryl oxidase 1 (QSOX1) from Cavia porcellus (Guinea pig).